We begin with the raw amino-acid sequence, 240 residues long: Large ribosomal subunit protein uL2 (240 aa).

Polar residues predominate over residues 1–20 (MGKRLQSQNRGKGTPRYTSP). Disordered regions lie at residues 1–33 (MGKR…YRKF) and 204–240 (PFGG…TGKR). 2 stretches are compositionally biased toward basic residues: residues 21 to 30 (THKRKGAVKY) and 224 to 240 (SPGR…TGKR).

It belongs to the universal ribosomal protein uL2 family. As to quaternary structure, part of the 50S ribosomal subunit. Forms a bridge to the 30S subunit in the 70S ribosome.

Functionally, one of the primary rRNA binding proteins. Required for association of the 30S and 50S subunits to form the 70S ribosome, for tRNA binding and peptide bond formation. It has been suggested to have peptidyltransferase activity; this is somewhat controversial. Makes several contacts with the 16S rRNA in the 70S ribosome. This Methanococcus aeolicus (strain ATCC BAA-1280 / DSM 17508 / OCM 812 / Nankai-3) protein is Large ribosomal subunit protein uL2.